Here is a 260-residue protein sequence, read N- to C-terminus: Manganese transport system ATP-binding protein MntA (260 aa).

In terms of domain architecture, ABC transporter spans 10-245; that stretch reads ISVDGVSVTY…NLELTFGGLP (236 aa). 43-50 lines the ATP pocket; that stretch reads GPNGSGKS.

It belongs to the ABC transporter superfamily.

Part of an ATP-driven transport system for manganese. This is Manganese transport system ATP-binding protein MntA (mntA) from Synechocystis sp. (strain ATCC 27184 / PCC 6803 / Kazusa).